The sequence spans 209 residues: Germin-like protein (209 aa).

The N-terminal stretch at 1–18 is a signal peptide; sequence MIVPIFFLFSLLFSSSHG. The cysteines at positions 24 and 39 are disulfide-linked. Residues 53-199 enclose the Cupin type-1 domain; sequence SGLGITGNTT…ASFLDPAEIK (147 aa). The N-linked (GlcNAc...) asparagine glycan is linked to asparagine 60. Mn(2+) contacts are provided by histidine 101, histidine 103, glutamate 108, and histidine 147.

It localises to the secreted. The protein localises to the extracellular space. It is found in the apoplast. Functionally, has antibacterial activity against B.subtilis (MIC=5 ug), B.cereus (MIC=50 ug), A.hydrophila (MIC=2.5 ug), S.marcescens(MIC=10 ug), S.enterica (MIC=10 ug), P.entomophila (MIC=2.5 ug) and P.rhodesiae (MIC=10 ug). Has antifungal activity against F.solani KACC 40384 and F.oxysporum KACC 40032. Probably has no oxalate oxidase activity even if the active site is conserved. The chain is Germin-like protein from Morus alba (White mulberry).